A 412-amino-acid polypeptide reads, in one-letter code: Inositol polyphosphate-5-phosphatase A (412 aa).

Cysteine 409 carries the S-farnesyl cysteine lipid modification. The propeptide at 410-412 (VVQ) is removed in mature form.

This sequence belongs to the inositol 1,4,5-trisphosphate 5-phosphatase type I family. As to quaternary structure, interacts with TASOR. Post-translationally, isoprenylation at Cys-409 is required for localization at the membrane. As to expression, expressed at high levels in cerebellar Purkinje cells (at protein level). Expressed in Sertoli cells of the testis.

It is found in the cell membrane. It localises to the cell projection. The protein localises to the dendrite. It carries out the reaction 1D-myo-inositol 1,4,5-trisphosphate + H2O = 1D-myo-inositol 1,4-bisphosphate + phosphate. It catalyses the reaction 1D-myo-inositol 1,3,4,5-tetrakisphosphate + H2O = 1D-myo-inositol 1,3,4-trisphosphate + phosphate. In terms of biological role, phosphatase that specifically hydrolyzes the 5-phosphate of inositol 1,4,5-trisphosphate to inositol 1,4-bisphosphate, and inositol 1,3,4,5-tetrasphosphate to inositol 1,3,4-trisphosphate. Plays a crucial role in the survival of cerebellar Purkinje cells. This is Inositol polyphosphate-5-phosphatase A (Inpp5a) from Mus musculus (Mouse).